The primary structure comprises 420 residues: Glucose-1-phosphate adenylyltransferase (420 aa).

Alpha-D-glucose 1-phosphate contacts are provided by residues Y107, G172, 187–188 (EK), and S205.

Belongs to the bacterial/plant glucose-1-phosphate adenylyltransferase family. As to quaternary structure, homotetramer.

It carries out the reaction alpha-D-glucose 1-phosphate + ATP + H(+) = ADP-alpha-D-glucose + diphosphate. The protein operates within glycan biosynthesis; glycogen biosynthesis. In terms of biological role, involved in the biosynthesis of ADP-glucose, a building block required for the elongation reactions to produce glycogen. Catalyzes the reaction between ATP and alpha-D-glucose 1-phosphate (G1P) to produce pyrophosphate and ADP-Glc. In Sinorhizobium fredii (strain NBRC 101917 / NGR234), this protein is Glucose-1-phosphate adenylyltransferase.